A 668-amino-acid polypeptide reads, in one-letter code: tRNA 5-methylaminomethyl-2-thiouridine biosynthesis bifunctional protein MnmC (668 aa).

Positions 1 to 245 (MKHYSIQPAN…KREMLCGVME (245 aa)) are tRNA (mnm(5)s(2)U34)-methyltransferase. An FAD-dependent cmnm(5)s(2)U34 oxidoreductase region spans residues 270–668 (IGGGIASALL…LLKGKAVKAG (399 aa)).

This sequence in the N-terminal section; belongs to the methyltransferase superfamily. tRNA (mnm(5)s(2)U34)-methyltransferase family. It in the C-terminal section; belongs to the DAO family. FAD serves as cofactor.

It is found in the cytoplasm. The enzyme catalyses 5-aminomethyl-2-thiouridine(34) in tRNA + S-adenosyl-L-methionine = 5-methylaminomethyl-2-thiouridine(34) in tRNA + S-adenosyl-L-homocysteine + H(+). Catalyzes the last two steps in the biosynthesis of 5-methylaminomethyl-2-thiouridine (mnm(5)s(2)U) at the wobble position (U34) in tRNA. Catalyzes the FAD-dependent demodification of cmnm(5)s(2)U34 to nm(5)s(2)U34, followed by the transfer of a methyl group from S-adenosyl-L-methionine to nm(5)s(2)U34, to form mnm(5)s(2)U34. This is tRNA 5-methylaminomethyl-2-thiouridine biosynthesis bifunctional protein MnmC from Escherichia coli O6:H1 (strain CFT073 / ATCC 700928 / UPEC).